The chain runs to 272 residues: MPFVIAYPVIDPVLLSIGPLPIRWYALAYIAGLVIGWAYARHLVARASFWGGRVRPDLGVIDDLLVYTALGVILGGRLGYVVFYNPAFYLSHPLDVFKLWQGGMSFHGGLVGAGVGVMLLARRRGLPTLALGDIVSAVAPIGLFLGRIANFIKPELWGRPTDVPWAMVFPGAGDLPRHPSQLYEAAAEGALLFLLLFVAVRLGALKRSGLVTGLFAIGYGCARILCEFFREPDPQLGFLFGGATMGMLLSLPLIAAGLALVAFAYRREAVPA.

Helical transmembrane passes span 24-44, 64-84, 99-119, and 125-145; these read WYALAYIAGLVIGWAYARHLV, LLVYTALGVILGGRLGYVVFY, LWQGGMSFHGGLVGAGVGVML, and GLPTLALGDIVSAVAPIGLFL. Position 147 (R147) interacts with a 1,2-diacyl-sn-glycero-3-phospho-(1'-sn-glycerol). 3 consecutive transmembrane segments (helical) span residues 185-205, 209-229, and 245-265; these read AAAEGALLFLLLFVAVRLGAL, GLVTGLFAIGYGCARILCEFF, and MGMLLSLPLIAAGLALVAFAY.

Belongs to the Lgt family.

It localises to the cell inner membrane. The enzyme catalyses L-cysteinyl-[prolipoprotein] + a 1,2-diacyl-sn-glycero-3-phospho-(1'-sn-glycerol) = an S-1,2-diacyl-sn-glyceryl-L-cysteinyl-[prolipoprotein] + sn-glycerol 1-phosphate + H(+). It participates in protein modification; lipoprotein biosynthesis (diacylglyceryl transfer). Catalyzes the transfer of the diacylglyceryl group from phosphatidylglycerol to the sulfhydryl group of the N-terminal cysteine of a prolipoprotein, the first step in the formation of mature lipoproteins. This is Phosphatidylglycerol--prolipoprotein diacylglyceryl transferase from Methylocella silvestris (strain DSM 15510 / CIP 108128 / LMG 27833 / NCIMB 13906 / BL2).